Reading from the N-terminus, the 233-residue chain is Small ribosomal subunit protein uS3 (233 aa).

The KH type-2 domain maps to 39 to 107 (VRKYLTKELE…PAQINIAEVR (69 aa)). Positions 214–233 (VEQPEKPSAQPKKQQRKGRK) are disordered.

The protein belongs to the universal ribosomal protein uS3 family. Part of the 30S ribosomal subunit. Forms a tight complex with proteins S10 and S14.

Functionally, binds the lower part of the 30S subunit head. Binds mRNA in the 70S ribosome, positioning it for translation. The polypeptide is Small ribosomal subunit protein uS3 (Pectobacterium atrosepticum (strain SCRI 1043 / ATCC BAA-672) (Erwinia carotovora subsp. atroseptica)).